A 679-amino-acid polypeptide reads, in one-letter code: E3 ubiquitin ligase RNF157 (679 aa).

G2 carries the N-myristoyl glycine lipid modification. Residues 277–316 (CVVCLSDVRDTLILPCRHLCLCNTCADTLRYQANNCPICR) form an RING-type zinc finger. A D-box 1 motif is present at residues 329–332 (RKKL). Composition is skewed to polar residues over residues 339-349 (SFNPIISSQTS) and 478-537 (ESEN…SMSG). Disordered regions lie at residues 339–362 (SFNP…NIPP), 416–604 (LDRL…TQEG), and 650–679 (VSRN…PLAV). Residues 585 to 598 (QDAEGNDVIEEEDG) show a composition bias toward acidic residues. Positions 656–659 (RRRL) match the D-box 2 motif. Phosphoserine occurs at positions 660, 661, 662, and 663.

As to quaternary structure, interacts with APBB1. Interacts with CHD1; CHD1-binding controls RNF157 stability. Interacts with ATRN, MEGF8, TECR, MSI2, PLRG1, BYSL, MTERF3, PSMA1, MRPS18B, PRPF4, FASTKD2, SLC25A1, SMU1, CNOT9, MRPS2, MAGT1, FXR2, EMD, PSMD8, HDAC1, RAN, HSD17B12, TXNDC5 and MRPL19. Post-translationally, phosphorylation at Ser-660, Ser-661, Ser-662 and Ser-663 downstream of the PI3K and MAPK pathways influences the E3 ligase activity and stability of RNF157 during the cell cycle in an anaphase-promoting complex/cyclosome-CDH1-dependent manner.

Its subcellular location is the cytoplasm. The catalysed reaction is S-ubiquitinyl-[E2 ubiquitin-conjugating enzyme]-L-cysteine + [acceptor protein]-L-lysine = [E2 ubiquitin-conjugating enzyme]-L-cysteine + N(6)-ubiquitinyl-[acceptor protein]-L-lysine.. E3 ubiquitin ligase that ubiquitinates APBB1 for its degradation by the proteasome and thus prevents apoptosis and promotes survival of neurons. Has a dual role in neurons as it is also required for dendrite growth and maintenance for which its ligase activity is not critical. May act as a scaffold molecule to regulate this process. Acts as a downstream effector of the interconnected PI3K and MAPK signaling pathways and thus participates in the regulation of the cell cycle. The chain is E3 ubiquitin ligase RNF157 (RNF157) from Homo sapiens (Human).